A 215-amino-acid polypeptide reads, in one-letter code: MPSQRHYSPADRLLMQADAALRTLLPFSGQPSRPSPALLKTEAELSESEARHVAGLMRINHTGEVCAQALYQGQALTARLPQVRQAMEQAADEEIDHLAWCEQRIRQLGSHTSVLNPIFYGLSFGIGASAGLISDRISLGFVAATEDQVCKHLDDHLGQLPAGDEKSRAILEQMREDEAQHSTAAIEAGGLRFPAPVKFGMSLVSKVMTKATYRI.

Residues Glu-64, Glu-94, His-97, Glu-146, Glu-178, and His-181 each coordinate Fe cation.

Belongs to the COQ7 family. It depends on Fe cation as a cofactor.

It is found in the cell membrane. It catalyses the reaction a 5-methoxy-2-methyl-3-(all-trans-polyprenyl)benzene-1,4-diol + AH2 + O2 = a 3-demethylubiquinol + A + H2O. It participates in cofactor biosynthesis; ubiquinone biosynthesis. Catalyzes the hydroxylation of 2-nonaprenyl-3-methyl-6-methoxy-1,4-benzoquinol during ubiquinone biosynthesis. This is 3-demethoxyubiquinol 3-hydroxylase from Stutzerimonas stutzeri (strain A1501) (Pseudomonas stutzeri).